The sequence spans 505 residues: Outer capsid protein VP5 (505 aa).

The involved in membrane permeabilization stretch occupies residues 1 to 42; sequence MGKFTSFLKRAGNATKRALTSDSAKKMYKLAGKTLQRVVESE.

The protein belongs to the orbivirus VP5 family.

It is found in the virion. Its function is as follows. VP5 protein is one of the two proteins (with VP2) which constitute the virus particle outer capsid. Acts as a membrane permeabilization protein that mediates release of viral particles from endosomal compartments into the cytoplasm. Permeabilization activity is probably negatively regulated by VP2 and is triggered by endosomal degradation of VP2 and exposure to low pH. This chain is Outer capsid protein VP5 (Segment-6), found in African horse sickness virus (AHSV).